The chain runs to 154 residues: Endoribonuclease YbeY (154 aa).

Positions 113, 117, and 123 each coordinate Zn(2+).

This sequence belongs to the endoribonuclease YbeY family. Requires Zn(2+) as cofactor.

It is found in the cytoplasm. Single strand-specific metallo-endoribonuclease involved in late-stage 70S ribosome quality control and in maturation of the 3' terminus of the 16S rRNA. The chain is Endoribonuclease YbeY from Ehrlichia chaffeensis (strain ATCC CRL-10679 / Arkansas).